The chain runs to 51 residues: Large ribosomal subunit protein eL39 (51 aa).

It belongs to the eukaryotic ribosomal protein eL39 family.

Functionally, binds specifically to a region in 26S rRNA near the subunit interface. In Sulfolobus acidocaldarius (strain ATCC 33909 / DSM 639 / JCM 8929 / NBRC 15157 / NCIMB 11770), this protein is Large ribosomal subunit protein eL39 (rpl39e).